The sequence spans 527 residues: Phosphoenolpyruvate carboxykinase (ATP) (527 aa).

Arg54, Tyr190, and Lys196 together coordinate substrate. Residues Lys196, His215, and 231-239 each bind ATP; that span reads GLSGTGKTT. Lys196 and His215 together coordinate Mn(2+). Position 252 (Asp252) interacts with Mn(2+). ATP contacts are provided by residues Glu280, Arg317, 436–437, and Thr442; that span reads RI. Substrate is bound at residue Arg317.

The protein belongs to the phosphoenolpyruvate carboxykinase (ATP) family. Mn(2+) serves as cofactor.

The protein resides in the cytoplasm. It carries out the reaction oxaloacetate + ATP = phosphoenolpyruvate + ADP + CO2. Its pathway is carbohydrate biosynthesis; gluconeogenesis. Involved in the gluconeogenesis. Catalyzes the conversion of oxaloacetate (OAA) to phosphoenolpyruvate (PEP) through direct phosphoryl transfer between the nucleoside triphosphate and OAA. The chain is Phosphoenolpyruvate carboxykinase (ATP) from Oceanobacillus iheyensis (strain DSM 14371 / CIP 107618 / JCM 11309 / KCTC 3954 / HTE831).